Reading from the N-terminus, the 557-residue chain is CTP synthase (557 aa).

The amidoligase domain stretch occupies residues 1–267 (MAKYIFVTGG…GAYLTQRLGL (267 aa)). A CTP-binding site is contributed by S13. S13 is a UTP binding site. 14–19 (SVGKGI) contacts ATP. Y54 provides a ligand contact to L-glutamine. D71 lines the ATP pocket. The Mg(2+) site is built by D71 and E141. CTP is bound by residues 148-150 (DIE), 188-193 (KTKPTQ), and K224. Residues 188-193 (KTKPTQ) and K224 contribute to the UTP site. The Glutamine amidotransferase type-1 domain maps to 292–535 (AIALVGKYVE…VAAAAKTFRE (244 aa)). An L-glutamine-binding site is contributed by G354. The active-site Nucleophile; for glutamine hydrolysis is the C381. Residues 382 to 385 (LGMQ), E406, and R463 each bind L-glutamine. Catalysis depends on residues H508 and E510. The tract at residues 536-557 (GDQRPLPLEQNGAVTEHEPHSR) is disordered.

Belongs to the CTP synthase family. As to quaternary structure, homotetramer.

It catalyses the reaction UTP + L-glutamine + ATP + H2O = CTP + L-glutamate + ADP + phosphate + 2 H(+). It carries out the reaction L-glutamine + H2O = L-glutamate + NH4(+). The catalysed reaction is UTP + NH4(+) + ATP = CTP + ADP + phosphate + 2 H(+). It participates in pyrimidine metabolism; CTP biosynthesis via de novo pathway; CTP from UDP: step 2/2. Allosterically activated by GTP, when glutamine is the substrate; GTP has no effect on the reaction when ammonia is the substrate. The allosteric effector GTP functions by stabilizing the protein conformation that binds the tetrahedral intermediate(s) formed during glutamine hydrolysis. Inhibited by the product CTP, via allosteric rather than competitive inhibition. Catalyzes the ATP-dependent amination of UTP to CTP with either L-glutamine or ammonia as the source of nitrogen. Regulates intracellular CTP levels through interactions with the four ribonucleotide triphosphates. This is CTP synthase from Roseiflexus sp. (strain RS-1).